Reading from the N-terminus, the 121-residue chain is Dihydroneopterin aldolase (121 aa).

The substrate site is built by Glu25 and Met114.

It belongs to the archaeal dihydroneopterin aldolase family. As to quaternary structure, homotetramer.

It catalyses the reaction 7,8-dihydroneopterin = 6-hydroxymethyl-7,8-dihydropterin + glycolaldehyde. It participates in cofactor biosynthesis; 5,6,7,8-tetrahydromethanopterin biosynthesis. Functionally, catalyzes the conversion of 7,8-dihydroneopterin (H2Neo) to 6-hydroxymethyl-7,8-dihydropterin (6-HMD). The sequence is that of Dihydroneopterin aldolase from Methanocaldococcus jannaschii (strain ATCC 43067 / DSM 2661 / JAL-1 / JCM 10045 / NBRC 100440) (Methanococcus jannaschii).